Here is a 280-residue protein sequence, read N- to C-terminus: Succinate dehydrogenase [ubiquinone] iron-sulfur subunit, mitochondrial (280 aa).

The transit peptide at Met1–Phe25 directs the protein to the mitochondrion. Residues Lys39–Leu129 enclose the 2Fe-2S ferredoxin-type domain. 4 residues coordinate [2Fe-2S] cluster: Cys92, Cys97, Cys100, and Cys112. Positions Asp175–Tyr205 constitute a 4Fe-4S ferredoxin-type domain. [4Fe-4S] cluster is bound by residues Cys185, Cys188, and Cys191. Residue Cys195 coordinates [3Fe-4S] cluster. Residue Trp200 coordinates a ubiquinone. 2 residues coordinate [3Fe-4S] cluster: Cys242 and Cys248. Position 252 (Cys252) interacts with [4Fe-4S] cluster.

This sequence belongs to the succinate dehydrogenase/fumarate reductase iron-sulfur protein family. Component of complex II composed of four subunits: the flavoprotein (FP) sdha, iron-sulfur protein (IP) sdhb, and a cytochrome b composed of sdhc and sdhd. It depends on [2Fe-2S] cluster as a cofactor. Requires [3Fe-4S] cluster as cofactor. [4Fe-4S] cluster is required as a cofactor.

Its subcellular location is the mitochondrion inner membrane. It carries out the reaction a quinone + succinate = fumarate + a quinol. The catalysed reaction is (R)-malate + a quinone = enol-oxaloacetate + a quinol. It catalyses the reaction (S)-malate + a quinone = enol-oxaloacetate + a quinol. It participates in carbohydrate metabolism; tricarboxylic acid cycle; fumarate from succinate (eukaryal route): step 1/1. Enol-oxaloacetate inhibits the succinate dehydrogenase activity. Functionally, iron-sulfur protein (IP) subunit of the succinate dehydrogenase complex (mitochondrial respiratory chain complex II), responsible for transferring electrons from succinate to ubiquinone (coenzyme Q). SDH also oxidizes malate to the non-canonical enol form of oxaloacetate, enol-oxaloacetate. Enol-oxaloacetate, which is a potent inhibitor of the succinate dehydrogenase activity, is further isomerized into keto-oxaloacetate. This Danio rerio (Zebrafish) protein is Succinate dehydrogenase [ubiquinone] iron-sulfur subunit, mitochondrial (sdhb).